We begin with the raw amino-acid sequence, 480 residues long: Acyl-coenzyme A synthetase ACSM6, mitochondrial (480 aa).

The N-terminal 21 residues, 1-21, are a transit peptide targeting the mitochondrion; that stretch reads MLGRFQPFSLVRSFRLGFEAC. ATP contacts are provided by residues 226-234, 366-371, aspartate 453, and arginine 468; these read TKGTTGAPK and EGYGQT.

The protein belongs to the ATP-dependent AMP-binding enzyme family. Monomer. The cofactor is Mg(2+). Requires Mn(2+) as cofactor.

It is found in the mitochondrion. It catalyses the reaction a medium-chain fatty acid + ATP + CoA = a medium-chain fatty acyl-CoA + AMP + diphosphate. Catalyzes the activation of fatty acids by CoA to produce an acyl-CoA, the first step in fatty acid metabolism. This Homo sapiens (Human) protein is Acyl-coenzyme A synthetase ACSM6, mitochondrial (ACSM6).